A 397-amino-acid chain; its full sequence is Vacuolar protein sorting-associated protein 37A (397 aa).

Phosphoserine is present on serine 18. The region spanning lysine 308–leucine 397 is the VPS37 C-terminal domain.

This sequence belongs to the VPS37 family. As to quaternary structure, component of the ESCRT-I complex (endosomal sorting complex required for transport I) which consists of TSG101, VPS28, a VPS37 protein (VPS37A to -D) and MVB12A or MVB12B in a 1:1:1:1 stoichiometry. Interacts with TSG101, VPS28 and HGS. Component of an ESCRT-I complex (endosomal sorting complex required for transport I) which consists of TSG101, VPS28, VPS37A and UBAP1 in a 1:1:1:1 stoichiometry.

It is found in the late endosome membrane. Its subcellular location is the nucleus. Component of the ESCRT-I complex, a regulator of vesicular trafficking process. Required for the sorting of endocytic ubiquitinated cargos into multivesicular bodies. May be involved in cell growth and differentiation. This is Vacuolar protein sorting-associated protein 37A (Vps37a) from Mus musculus (Mouse).